Reading from the N-terminus, the 186-residue chain is MLALISRLLDWFRSLFWKEEMELTLVGLQYSGKTTFVNVIASGQFSEDMIPTVGFNMRKVTKGNVTIKIWDIGGQPRYRSMWERYCRGVNAIVYMIDAADREKIEASRNELHNLLDKPQLQGIPVLVLGNKRDLPNALDEKQLIEKMNLSAIQDREICCYSISCKEKDNIDITLQWLIQYSKSRRS.

An intramembrane region (note=Mediates targeting to membranes) is located at residues methionine 1–glutamate 19. GTP is bound by residues glutamine 29–threonine 35, aspartate 71–glutamine 75, and asparagine 130–aspartate 133. A Glycyl lysine isopeptide (Lys-Gly) (interchain with G-Cter in ubiquitin) cross-link involves residue lysine 141.

Belongs to the small GTPase superfamily. Arf family. As to quaternary structure, interacts with tubulin. Interacts with BORCS5; recruits ARL8B to lysosomes. Interacts with VPS41; the interaction mediates the recruitment of the HOPS complex to lysosomes. Interacts (GTP-bound form) with PLEKHM2 (via RUN domain); the interaction is required to recruit the motor protein kinesin-1 on lysosomes. Interacts (GTP-bound form) with PLEKHM1 (via RUN domain); the interaction is required for PLEKHM1 localization to lysosomes and for ARL8B function in delivery and degradation of endocytic and autophagic cargo in lysosomes. PLEKHM1 and PLEKHM2 compete for interaction with ARL8B. Interacts (GTP-bound form) with RUFY1; the interaction is required for RUFY1 endosomal location. When GTP-bound, interacts with RUFY3 and RUFY4, but not with RUFY1, nor RUFY2. In terms of processing, ubiquitinated at Lys-141 by RNF167, leading to its degradation.

It localises to the late endosome membrane. The protein resides in the lysosome membrane. It is found in the cytoplasm. Its subcellular location is the cytoskeleton. The protein localises to the spindle. It localises to the cell projection. The protein resides in the axon. It is found in the synapse. Its subcellular location is the cytolytic granule membrane. The protein localises to the early endosome membrane. It carries out the reaction GTP + H2O = GDP + phosphate + H(+). In terms of biological role, small GTPase which cycles between active GTP-bound and inactive GDP-bound states. In its active state, binds to a variety of effector proteins playing a key role in the regulation of lysosomal positioning which is important for nutrient sensing, natural killer cell-mediated cytotoxicity and antigen presentation. Along with its effectors, orchestrates lysosomal transport and fusion. Localizes specifically to lysosomal membranes and mediates anterograde lysosomal motility by recruiting PLEKHM2, which in turn recruits the motor protein kinesin-1 on lysosomes. Required for lysosomal and cytolytic granule exocytosis. Critical factor involved in NK cell-mediated cytotoxicity. Drives the polarization of cytolytic granules and microtubule-organizing centers (MTOCs) toward the immune synapse between effector NK lymphocytes and target cells. In neurons, mediates the anterograde axonal long-range transport of presynaptic lysosome-related vesicles required for presynaptic biogenesis and synaptic function. Also acts as a regulator of endosome to lysosome trafficking pathways of special significance for host defense. Recruits RUFY1 onto early endosomes regulating endosomes to trans-Golgi network proteins retrieval. Regulates cargo trafficking to lysosomes by binding to PLEKHM1 and recruiting the HOPS subunit VPS41, resulting in functional assembly of the HOPS complex on lysosomal membranes. Plays an important role in cargo delivery to lysosomes for antigen presentation and microbial killing. Directs the intersection of CD1d with lipid antigens in lysosomes, and plays a role in intersecting phagosomes with lysosomes to generate phagolysosomes that kill microbes. Involved in the process of MHC II presentation. Regulates the delivery of antigens to lysosomes and the formation of MHC II-peptide complexes through the recruitment of the HOPS complex to lysosomes allowing the fusion of late endosomes to lysosomes. May play a role in chromosome segregation. This Macaca fascicularis (Crab-eating macaque) protein is ADP-ribosylation factor-like protein 8B (ARL8B).